We begin with the raw amino-acid sequence, 426 residues long: Selenate reductase subunit C (426 aa).

Helical transmembrane passes span 5-25, 40-60, 78-98, 119-139, 187-207, 223-243, 261-281, 302-322, 330-350, and 385-405; these read LYFTVLSFIAIVGVISLYIRL, WGLWIVFYIYFIGLSAGSFLL, LALFTAFFSLMAGLLFVLIDL, WEIQFYLIYMLLIVAEIWFLM, ILGIAGIPTAVGVHGGTGSLF, IIFLVSALVSGAALMLFLYSF, LLTLFIGIDLLLMIAEFLIGL, FIFWIGQIGMVIILPILLITI, MGLAGLSVVLGIVCVRWILVI, and VGLIGIVILLFSITVQLVPVF.

This sequence belongs to the NrfD family. In terms of assembly, the complex is composed of three subunits: SrdA, SrdB and SrdC.

The protein localises to the cell membrane. It catalyses the reaction selenite + a quinone + H2O = selenate + a quinol. Functionally, component of the respiratory selenate reductase complex, which catalyzes the reduction of selenate to selenite. This subunit probably receives electrons directly from the membrane quinone pool and transfers the electrons to the iron-sulfur clusters of SrdB. May be the membrane anchor protein subunit of the complex. The protein is Selenate reductase subunit C of Mesobacillus selenatarsenatis (strain DSM 18680 / JCM 14380 / FERM P-15431 / SF-1).